The primary structure comprises 855 residues: Photoactivated adenylate cyclase subunit beta-like protein 1224-5/9F (855 aa).

In terms of domain architecture, BLUF 1 spans 56-149; the sequence is LRRLMYLSKG…GRMSGVWHMK (94 aa). A disordered region spans residues 420–444; the sequence is RPPIFDDTPKCNPRPRTPGCEGRQR. The 93-residue stretch at 471 to 563 folds into the BLUF 2 domain; the sequence is VPTLTYISHA…RVYPSEWTLT (93 aa). The segment covering 813 to 827 has biased composition (basic and acidic residues); it reads RSGEKPLTEPEEAKL. The tract at residues 813–855 is disordered; that stretch reads RSGEKPLTEPEEAKLDFSPGRVRHGDSGRRSNSAQGKLSIQVR. Polar residues predominate over residues 842 to 855; the sequence is RSNSAQGKLSIQVR.

Heterotetramer of two alpha and two beta subunits.

The protein localises to the cell projection. It is found in the cilium. It localises to the flagellum. This is Photoactivated adenylate cyclase subunit beta-like protein 1224-5/9F from Euglena gracilis.